A 403-amino-acid polypeptide reads, in one-letter code: RNA-binding motif, single-stranded-interacting protein 1 (403 aa).

The interval 30–56 (PAHPMAPPSPSTTSSNNNSSSSSNSGW) is disordered. Low complexity predominate over residues 40–54 (STTSSNNNSSSSSNS). 2 RRM domains span residues 62-135 (TNLY…MAKQ) and 141-226 (TNLY…FADG). T208 carries the post-translational modification Phosphothreonine.

The protein localises to the nucleus. In terms of biological role, single-stranded DNA binding protein that interacts with the region upstream of the C-myc gene. Binds specifically to the DNA sequence motif 5'-[AT]CT[AT][AT]T-3'. Probably has a role in DNA replication. This is RNA-binding motif, single-stranded-interacting protein 1 (RBMS1) from Bos taurus (Bovine).